The following is a 435-amino-acid chain: DEAD-box ATP-dependent RNA helicase CshB (435 aa).

The short motif at 5–33 is the Q motif element; it reads SRFDQFGFQPFIGLAIDKLGFYEPTEVQQ. Residues 36 to 208 form the Helicase ATP-binding domain; the sequence is IPGILKGESI…SKYMENPRYE (173 aa). 49–56 serves as a coordination point for ATP; sequence SQTGTGKT. The DEAD box signature appears at 156-159; sequence DEAD. The 144-residue stretch at 235–378 folds into the Helicase C-terminal domain; that stretch reads LLKNVLVGSQ…HVDWKNKEFV (144 aa). The segment at 383–435 is disordered; sequence RNRRAKREAKRETADPREIGMRKKAKQKGKPNYKKKINYKMNEIKRRERRKKR. Residues 391 to 403 show a composition bias toward basic and acidic residues; the sequence is AKRETADPREIGM. Basic residues predominate over residues 404–420; it reads RKKAKQKGKPNYKKKIN.

The protein belongs to the DEAD box helicase family. CshB subfamily.

Its subcellular location is the cytoplasm. It carries out the reaction ATP + H2O = ADP + phosphate + H(+). DEAD-box RNA helicase involved in cold tolerance, motility, and tolerance to heat, alkali and oxidative stress. This chain is DEAD-box ATP-dependent RNA helicase CshB, found in Listeria monocytogenes serovar 1/2a (strain ATCC BAA-679 / EGD-e).